The sequence spans 288 residues: Acetyl-coenzyme A carboxylase carboxyl transferase subunit beta (288 aa).

The 255-residue stretch at 34-288 (LFAKCPACKH…HLVAFHGGGQ (255 aa)) folds into the CoA carboxyltransferase N-terminal domain. Positions 38, 41, 56, and 59 each coordinate Zn(2+). A C4-type zinc finger spans residues 38-59 (CPACKHMIYKKDLGLAKICPTC).

It belongs to the AccD/PCCB family. In terms of assembly, acetyl-CoA carboxylase is a heterohexamer composed of biotin carboxyl carrier protein (AccB), biotin carboxylase (AccC) and two subunits each of ACCase subunit alpha (AccA) and ACCase subunit beta (AccD). It depends on Zn(2+) as a cofactor.

It localises to the cytoplasm. The enzyme catalyses N(6)-carboxybiotinyl-L-lysyl-[protein] + acetyl-CoA = N(6)-biotinyl-L-lysyl-[protein] + malonyl-CoA. It functions in the pathway lipid metabolism; malonyl-CoA biosynthesis; malonyl-CoA from acetyl-CoA: step 1/1. Component of the acetyl coenzyme A carboxylase (ACC) complex. Biotin carboxylase (BC) catalyzes the carboxylation of biotin on its carrier protein (BCCP) and then the CO(2) group is transferred by the transcarboxylase to acetyl-CoA to form malonyl-CoA. The protein is Acetyl-coenzyme A carboxylase carboxyl transferase subunit beta of Streptococcus pyogenes serotype M1.